The following is a 484-amino-acid chain: Probable protein disulfide-isomerase ER-60 (484 aa).

A signal peptide spans 1–14; sequence MRWLLSCLFLVAFA. Thioredoxin domains follow at residues 15–125 and 338–467; these read SCSK…SRAG and FEDG…REAT. Catalysis depends on nucleophile residues cysteine 46, cysteine 49, cysteine 388, and cysteine 391. 2 disulfides stabilise this stretch: cysteine 46–cysteine 49 and cysteine 388–cysteine 391. The short motif at 481 to 484 is the Prevents secretion from ER element; that stretch reads KSEL.

It belongs to the protein disulfide isomerase family.

Its subcellular location is the endoplasmic reticulum lumen. The enzyme catalyses Catalyzes the rearrangement of -S-S- bonds in proteins.. The chain is Probable protein disulfide-isomerase ER-60 from Schistosoma mansoni (Blood fluke).